We begin with the raw amino-acid sequence, 351 residues long: Ribosomal RNA small subunit methyltransferase H (351 aa).

S-adenosyl-L-methionine is bound by residues 48-50 (GGY), Asp67, Phe94, Asp115, and Gln122. Residues 298-351 (GPVLPSEAETEVNPRARSAKLRAGERTDGPAPPPLSAIETLASLPAPQGRGTRR) form a disordered region.

Belongs to the methyltransferase superfamily. RsmH family.

It localises to the cytoplasm. It carries out the reaction cytidine(1402) in 16S rRNA + S-adenosyl-L-methionine = N(4)-methylcytidine(1402) in 16S rRNA + S-adenosyl-L-homocysteine + H(+). In terms of biological role, specifically methylates the N4 position of cytidine in position 1402 (C1402) of 16S rRNA. The sequence is that of Ribosomal RNA small subunit methyltransferase H from Methylorubrum populi (strain ATCC BAA-705 / NCIMB 13946 / BJ001) (Methylobacterium populi).